We begin with the raw amino-acid sequence, 3393 residues long: Genome polyprotein (3393 aa).

Residues 1–91 are Cytoplasmic-facing; that stretch reads MVNPKGVNVM…GVSRRKKRRS (91 aa). Residues 28 to 60 form a hydrophobic; homodimerization of capsid protein C region; it reads VSRGLRGFVLFVLTQLFMGRKLTPNVRRLWKSS. Residues 91-108 constitute a propeptide, ER anchor for the capsid protein C, removed in mature form by serine protease NS3; it reads SATTSGTVFMAMLGLTLA. Residues 92–112 traverse the membrane as a helical segment; it reads ATTSGTVFMAMLGLTLAASVA. At 113-231 the chain is on the extracellular side; it reads RHAHHTLINI…FETQVQKVEK (119 aa). N-linked (GlcNAc...) asparagine; by host glycosylation is found at Asn121 and Asn137. The chain crosses the membrane as a helical span at residues 232-252; sequence WIIRNPTYAIAAILMSWYIGN. Residues 253–257 are Cytoplasmic-facing; it reads SLKQR. Residues 258 to 272 traverse the membrane as a helical segment; it reads VVLLLLTLALGPAYA. Residues 273 to 713 lie on the Extracellular side of the membrane; the sequence is THCVGIPKRD…IHTVFGTAFH (441 aa). Disulfide bonds link Cys275–Cys302, Cys346–Cys377, Cys364–Cys388, Cys453–Cys553, and Cys570–Cys600. Residues 370–383 form a fusion peptide region; it reads DRGWGNGCGLFGKG. The chain crosses the membrane as a helical span at residues 714–734; that stretch reads GIFGGLSWMTRILIGVLLVWL. Residues 735-745 lie on the Cytoplasmic side of the membrane; that stretch reads GLNSRNGTATT. The helical transmembrane segment at 746–763 threads the bilayer; the sequence is LMMLTGFIILFLSLGVGA. Residues 764-1112 lie on the Extracellular side of the membrane; the sequence is EVGCSVNWGQ…TPEKHLVRSW (349 aa). Disulfide bonds link Cys767-Cys778, Cys818-Cys905, Cys941-Cys986, Cys1043-Cys1092, Cys1054-Cys1075, Cys1054-Cys1076, Cys1075-Cys1079, and Cys1076-Cys1079. Asn893 and Asn970 each carry an N-linked (GlcNAc...) asparagine; by host glycan. A helical membrane pass occupies residues 1113–1133; that stretch reads VTAGDSYPAWSIGLVAMFLFV. The Cytoplasmic portion of the chain corresponds to 1134–1186; that stretch reads DIMARSRPTRKMMIGGTMLLLAIMIMGELSYLDLLRYIIVVGEHFIERENGGD. The helical transmembrane segment at 1187–1207 threads the bilayer; sequence VAYMAIMAASHLRPGLMAMVF. Residues 1208-1283 are Lumenal-facing; sequence AKSMWSPKQR…PVSMPVIRKA (76 aa). The helical transmembrane segment at 1284-1304 threads the bilayer; sequence SMIIGTGGLLLSLWKGGGSSM. Over 1305-1341 the chain is Cytoplasmic; the sequence is RKGLPLFAASAARVLGLTKAHLSVLFILLITKNGKRT. A helical membrane pass occupies residues 1342-1362; that stretch reads WPISECLAAVGIFGAAFGTMF. The Lumenal segment spans residues 1363–1365; sequence SED. A helical membrane pass occupies residues 1366-1386; the sequence is ETLLGPLALVGVVLIVYTMFT. Residues 1387 to 1438 are Cytoplasmic-facing; that stretch reads QSDGLELVKAADISWSDEAVVSGEARRFDVALNDSGEFKLLDEPPVSWLNVS. Positions 1393 to 1432 are interacts with and activates NS3 protease; it reads LVKAADISWSDEAVVSGEARRFDVALNDSGEFKLLDEPPV. The helical intramembrane region spans 1439–1459; sequence FLVVAIVASSLHPIALVVTLV. Residues 1460–2137 are Cytoplasmic-facing; the sequence is AWTYWRTEKR…KLALQQAPEA (678 aa). Residues 1470–1649 form the Peptidase S7 domain; the sequence is SGVLWDVPLA…QPGSVAEVET (180 aa). Residues His1521, Asp1545, and Ser1606 each act as charge relay system; for serine protease NS3 activity in the active site. Positions 1653 to 1809 constitute a Helicase ATP-binding domain; that stretch reads DKMLRKGEFT…ESNAEIEDVK (157 aa). The tract at residues 1657–1660 is important for RNA-binding; sequence RKGE. 1666–1673 is a binding site for ATP; it reads YHPGAGKT. Positions 1757–1760 match the DEAH box motif; it reads DEAH. The Helicase C-terminal domain maps to 1804–1984; that stretch reads EIEDVKKEIP…VAPLYEEEAS (181 aa). The chain crosses the membrane as a helical span at residues 2138–2158; that stretch reads VSTLLLLGMMAICTLGLVILL. Over 2159-2168 the chain is Lumenal; the sequence is MKPKATDKMS. Residues 2169–2184 constitute an intramembrane region (helical); sequence MAMVTMAITGYLLKLG. Gly2185 is a topological domain (lumenal). The helical transmembrane segment at 2186–2206 threads the bilayer; sequence MTHAQVGGILLVFFIMMVVII. Over 2207–2221 the chain is Cytoplasmic; that stretch reads PESGTQRSINDNKLA. A helical membrane pass occupies residues 2222 to 2236; that stretch reads YVIILVGLVIGGVAC. At 2237–2275 the chain is on the lumenal side; sequence NELGWLEKTKADLFGNNMTHAQTVVLPTINWNWLDFRPG. Positions 2276-2296 form an intramembrane region, helical; sequence AAWSLYVGMATFLTPVFVHWI. The Lumenal segment spans residues 2297-2344; the sequence is KNEYGNASLTGITPTAGILGALNQGVPFVKLNTSVGVLLLSVWNNFTT. The chain crosses the membrane as a helical span at residues 2345-2365; the sequence is SSMLAAMVMLACHCLFVLPGV. Residues 2366–2408 lie on the Cytoplasmic side of the membrane; it reads RAQCLREAQIRVFHGVAKNPMVDGNPTVDLEKENDMPDLYEKK. A helical transmembrane segment spans residues 2409-2429; it reads LALVALGMAAVLNAAMVRTAL. The Lumenal segment spans residues 2430 to 2457; the sequence is TTAEMVVLGSAAVGPLLEGNTSAFWNGP. A helical transmembrane segment spans residues 2458 to 2478; sequence LAVAVAGVMRGNHYALIGIVY. Residues 2479 to 3393 lie on the Cytoplasmic side of the membrane; the sequence is NLWLLKTARR…QRCSAYGELL (915 aa). The mRNA cap 0-1 NS5-type MT domain maps to 2489–2753; it reads GGSSALTYGE…DLIYPTGTRS (265 aa). S-adenosyl-L-methionine is bound at residue Ser2544. A Phosphoserine modification is found at Ser2544. Residue Lys2549 is the For 2'-O-MTase activity of the active site. S-adenosyl-L-methionine-binding residues include Gly2574, Trp2575, Thr2592, Leu2593, Asp2619, and Ile2620. Asp2634 functions as the For 2'-O-MTase activity in the catalytic mechanism. Residue Ile2635 participates in S-adenosyl-L-methionine binding. Residues Lys2670 and Glu2706 each act as for 2'-O-MTase activity in the active site. S-adenosyl-L-methionine is bound at residue Tyr2708. A Nuclear localization signal motif is present at residues 2860–2893; it reads REIMKVVNQWLFDYLGRTKQPRICTKEEFINKVR. The Zn(2+) site is built by Glu2927, His2931, Cys2936, and Cys2939. One can recognise a RdRp catalytic domain in the interval 3017–3169; the sequence is GLVYADDTAG…APVDESFAGA (153 aa). 3 residues coordinate Zn(2+): His3204, Cys3220, and Cys3339.

The protein in the N-terminal section; belongs to the class I-like SAM-binding methyltransferase superfamily. mRNA cap 0-1 NS5-type methyltransferase family. As to quaternary structure, homodimer. Interacts (via N-terminus) with host EXOC1 (via C-terminus); this interaction results in EXOC1 degradation through the proteasome degradation pathway. Forms heterodimers with envelope protein E in the endoplasmic reticulum and Golgi. In terms of assembly, homodimer; in the endoplasmic reticulum and Golgi. Interacts with protein prM. Interacts with non-structural protein 1. As to quaternary structure, homodimer; Homohexamer when secreted. Interacts with envelope protein E. Interacts (via N-terminus) with serine protease NS3. In terms of assembly, forms a heterodimer with serine protease NS3. May form homooligomers. As to quaternary structure, forms a heterodimer with NS2B. Interacts with non-structural protein 2A (via N-terminus). Interacts with NS4B. Interacts with unphosphorylated RNA-directed RNA polymerase NS5; this interaction stimulates RNA-directed RNA polymerase NS5 guanylyltransferase activity. NS3 interacts with host PDCD6IP; this interaction contributes to virion release. Interacts with serine protease NS3. In terms of assembly, homodimer. Interacts with host STAT2; this interaction prevents the establishment of cellular antiviral state. Interacts with host TRIM23; this interaction leads to NS5 ubiquitination. In terms of processing, specific enzymatic cleavages in vivo yield mature proteins. The nascent capsid protein C contains a C-terminal hydrophobic domain that act as a signal sequence for translocation of prM into the lumen of the ER. Mature capsid protein C is cleaved at a site upstream of this hydrophobic domain by NS3. prM is cleaved in post-Golgi vesicles by a host furin, releasing the mature small envelope protein M, and peptide pr. Non-structural protein 2A-alpha, a C-terminally truncated form of non-structural protein 2A, results from partial cleavage by NS3. Specific enzymatic cleavages in vivo yield mature proteins peptide 2K acts as a signal sequence and is removed from the N-terminus of NS4B by the host signal peptidase in the ER lumen. Signal cleavage at the 2K-4B site requires a prior NS3 protease-mediated cleavage at the 4A-2K site. Cleaved in post-Golgi vesicles by a host furin, releasing the mature small envelope protein M, and peptide pr. This cleavage is incomplete as up to 30% of viral particles still carry uncleaved prM. Post-translationally, N-glycosylated. In terms of processing, N-glycosylated. The excreted form is glycosylated and this is required for efficient secretion of the protein from infected cells. Polyubiquitinated; ubiquitination is probably mediated by host TRIM23 and is prerequisite for NS5-STAT2 interaction. NS5 is not ISGylated or sumoylated. Post-translationally, phosphorylated on serines residues. This phosphorylation may trigger NS5 nuclear localization.

The protein resides in the virion. It localises to the host nucleus. It is found in the host cytoplasm. The protein localises to the host perinuclear region. Its subcellular location is the secreted. The protein resides in the virion membrane. It localises to the host endoplasmic reticulum membrane. It catalyses the reaction Selective hydrolysis of -Xaa-Xaa-|-Yaa- bonds in which each of the Xaa can be either Arg or Lys and Yaa can be either Ser or Ala.. The catalysed reaction is RNA(n) + a ribonucleoside 5'-triphosphate = RNA(n+1) + diphosphate. The enzyme catalyses a ribonucleoside 5'-triphosphate + H2O = a ribonucleoside 5'-diphosphate + phosphate + H(+). It carries out the reaction ATP + H2O = ADP + phosphate + H(+). It catalyses the reaction a 5'-end (5'-triphosphoguanosine)-ribonucleoside in mRNA + S-adenosyl-L-methionine = a 5'-end (N(7)-methyl 5'-triphosphoguanosine)-ribonucleoside in mRNA + S-adenosyl-L-homocysteine. The catalysed reaction is a 5'-end (N(7)-methyl 5'-triphosphoguanosine)-ribonucleoside in mRNA + S-adenosyl-L-methionine = a 5'-end (N(7)-methyl 5'-triphosphoguanosine)-(2'-O-methyl-ribonucleoside) in mRNA + S-adenosyl-L-homocysteine + H(+). Functionally, plays a role in virus budding by binding to the cell membrane and gathering the viral RNA into a nucleocapsid that forms the core of a mature virus particle. During virus entry, may induce genome penetration into the host cytoplasm after hemifusion induced by the surface proteins. Can migrate to the cell nucleus where it modulates host functions. Inhibits RNA silencing by interfering with host Dicer. In terms of biological role, prevents premature fusion activity of envelope proteins in trans-Golgi by binding to envelope protein E at pH6.0. After virion release in extracellular space, gets dissociated from E dimers. Its function is as follows. Acts as a chaperone for envelope protein E during intracellular virion assembly by masking and inactivating envelope protein E fusion peptide. prM is the only viral peptide matured by host furin in the trans-Golgi network probably to avoid catastrophic activation of the viral fusion activity in acidic Golgi compartment prior to virion release. prM-E cleavage is inefficient, and many virions are only partially matured. These uncleaved prM would play a role in immune evasion. Functionally, may play a role in virus budding. Exerts cytotoxic effects by activating a mitochondrial apoptotic pathway through M ectodomain. May display a viroporin activity. Binds to host cell surface receptor and mediates fusion between viral and cellular membranes. Envelope protein is synthesized in the endoplasmic reticulum in the form of heterodimer with protein prM. They play a role in virion budding in the ER, and the newly formed immature particle is covered with 60 spikes composed of heterodimer between precursor prM and envelope protein E. The virion is transported to the Golgi apparatus where the low pH causes dissociation of PrM-E heterodimers and formation of E homodimers. prM-E cleavage is inefficient, and many virions are only partially matured. These uncleaved prM would play a role in immune evasion. In terms of biological role, involved in immune evasion, pathogenesis and viral replication. Once cleaved off the polyprotein, is targeted to three destinations: the viral replication cycle, the plasma membrane and the extracellular compartment. Essential for viral replication. Required for formation of the replication complex and recruitment of other non-structural proteins to the ER-derived membrane structures. Excreted as a hexameric lipoparticle that plays a role against host immune response. Antagonizing the complement function. Binds to the host macrophages and dendritic cells. Inhibits signal transduction originating from Toll-like receptor 3 (TLR3). Its function is as follows. Component of the viral RNA replication complex that functions in virion assembly and antagonizes the host immune response. Functionally, required cofactor for the serine protease function of NS3. May have membrane-destabilizing activity and form viroporins. Displays three enzymatic activities: serine protease, NTPase and RNA helicase. NS3 serine protease, in association with NS2B, performs its autocleavage and cleaves the polyprotein at dibasic sites in the cytoplasm: C-prM, NS2A-NS2B, NS2B-NS3, NS3-NS4A, NS4A-2K and NS4B-NS5. NS3 RNA helicase binds RNA and unwinds dsRNA in the 3' to 5' direction. Also plays a role in virus assembly. In terms of biological role, regulates the ATPase activity of the NS3 helicase activity. NS4A allows NS3 helicase to conserve energy during unwinding. Its function is as follows. Functions as a signal peptide for NS4B and is required for the interferon antagonism activity of the latter. Functionally, induces the formation of ER-derived membrane vesicles where the viral replication takes place. Inhibits interferon (IFN)-induced host STAT1 phosphorylation and nuclear translocation, thereby preventing the establishment of cellular antiviral state by blocking the IFN-alpha/beta pathway. Replicates the viral (+) and (-) RNA genome, and performs the capping of genomes in the cytoplasm. NS5 methylates viral RNA cap at guanine N-7 and ribose 2'-O positions. Besides its role in RNA genome replication, also prevents the establishment of cellular antiviral state by blocking the interferon-alpha/beta (IFN-alpha/beta) signaling pathway. IFN-I induces binding of NS5 to host IFN-activated transcription factor STAT2, preventing its transcriptional activity. Host TRIM23 is the E3 ligase that interacts with and polyubiquitinates NS5 to promote its binding to STAT2 and trigger IFN-I signaling inhibition. The chain is Genome polyprotein from Banzi virus (BANV).